The primary structure comprises 516 residues: Cytochrome P450 93G1 (516 aa).

Residues 11–31 traverse the membrane as a helical segment; that stretch reads LLGMGTTMGALALALVVVVVV. Cys454 lines the heme pocket.

It belongs to the cytochrome P450 family. It depends on heme as a cofactor.

It localises to the membrane. It carries out the reaction a flavanone + reduced [NADPH--hemoprotein reductase] + O2 = a flavone + oxidized [NADPH--hemoprotein reductase] + 2 H2O + H(+). It participates in secondary metabolite biosynthesis; flavonoid biosynthesis. Its function is as follows. Functions as a flavone synthase II (FNSII) that catalyzes the direct conversion of flavanones to flavones. In vitro, can convert naringenin and eriodictyol to apigenin and luteolin, respectively. Acts as a key branch point enzyme that channels flavanones to the biosynthesis of soluble tricin O-linked conjugates. The protein is Cytochrome P450 93G1 of Oryza sativa subsp. japonica (Rice).